Consider the following 207-residue polypeptide: Ribosomal RNA small subunit methyltransferase G (207 aa).

Residues Gly-74, Phe-79, 124–125 (VE), and Arg-138 contribute to the S-adenosyl-L-methionine site.

The protein belongs to the methyltransferase superfamily. RNA methyltransferase RsmG family.

The protein resides in the cytoplasm. It carries out the reaction guanosine(527) in 16S rRNA + S-adenosyl-L-methionine = N(7)-methylguanosine(527) in 16S rRNA + S-adenosyl-L-homocysteine. Its function is as follows. Specifically methylates the N7 position of guanine in position 527 of 16S rRNA. The chain is Ribosomal RNA small subunit methyltransferase G from Hyphomonas neptunium (strain ATCC 15444).